The chain runs to 607 residues: Elongation factor 4 (607 aa).

The tr-type G domain maps to 11–193; the sequence is ENIRNFSIIA…KIVEVVPAPD (183 aa). GTP-binding positions include 23–28 and 140–143; these read DHGKST and NKID.

Belongs to the TRAFAC class translation factor GTPase superfamily. Classic translation factor GTPase family. LepA subfamily.

The protein resides in the cell membrane. The catalysed reaction is GTP + H2O = GDP + phosphate + H(+). Required for accurate and efficient protein synthesis under certain stress conditions. May act as a fidelity factor of the translation reaction, by catalyzing a one-codon backward translocation of tRNAs on improperly translocated ribosomes. Back-translocation proceeds from a post-translocation (POST) complex to a pre-translocation (PRE) complex, thus giving elongation factor G a second chance to translocate the tRNAs correctly. Binds to ribosomes in a GTP-dependent manner. The polypeptide is Elongation factor 4 (Staphylococcus aureus (strain MW2)).